Reading from the N-terminus, the 20-residue chain is Photosystem II stability/assembly factor HCF136, chloroplastic (20 aa).

The protein belongs to the Ycf48 family.

Its subcellular location is the plastid. It localises to the chloroplast thylakoid lumen. Essential for photosystem II (PSII) biogenesis; required for assembly of an early intermediate in PSII assembly that includes D2 (psbD) and cytochrome b559. In Spinacia oleracea (Spinach), this protein is Photosystem II stability/assembly factor HCF136, chloroplastic.